We begin with the raw amino-acid sequence, 420 residues long: Diaminopimelate decarboxylase (420 aa).

An N6-(pyridoxal phosphate)lysine modification is found at Lys54. His191 is a substrate binding site. Pyridoxal 5'-phosphate is bound by residues Gly227 and 268–271; that span reads EPGR. Residues Arg271, Arg307, and Tyr311 each contribute to the substrate site. The Proton donor role is filled by Cys342. 2 residues coordinate substrate: Glu343 and Tyr378. Tyr378 provides a ligand contact to pyridoxal 5'-phosphate.

This sequence belongs to the Orn/Lys/Arg decarboxylase class-II family. LysA subfamily. It depends on pyridoxal 5'-phosphate as a cofactor.

It carries out the reaction meso-2,6-diaminopimelate + H(+) = L-lysine + CO2. The protein operates within amino-acid biosynthesis; L-lysine biosynthesis via DAP pathway; L-lysine from DL-2,6-diaminopimelate: step 1/1. Is activated by 2,3-dimercaptopropan-1-ol. Specifically catalyzes the decarboxylation of meso-diaminopimelate (meso-DAP) to L-lysine. Is not active against the DD- or LL-isomers of diaminopimelate. The chain is Diaminopimelate decarboxylase from Escherichia coli (strain K12).